A 277-amino-acid chain; its full sequence is Large ribosomal subunit protein uL2 (277 aa).

Residues 222 to 277 (GVAMNPVDHPHGGGEGRTSGGRHPVTPWGKPTKGKKTRSNKATDKFIMRSRHQRKK) are disordered.

It belongs to the universal ribosomal protein uL2 family. As to quaternary structure, part of the 50S ribosomal subunit. Forms a bridge to the 30S subunit in the 70S ribosome.

Functionally, one of the primary rRNA binding proteins. Required for association of the 30S and 50S subunits to form the 70S ribosome, for tRNA binding and peptide bond formation. It has been suggested to have peptidyltransferase activity; this is somewhat controversial. Makes several contacts with the 16S rRNA in the 70S ribosome. This Brucella canis (strain ATCC 23365 / NCTC 10854 / RM-666) protein is Large ribosomal subunit protein uL2.